We begin with the raw amino-acid sequence, 860 residues long: Leucine--tRNA ligase (860 aa).

A 'HIGH' region motif is present at residues 42–52 (PYPSGRLHMGH). A 'KMSKS' region motif is present at residues 619–623 (KMSKS). Residue Lys-622 participates in ATP binding.

It belongs to the class-I aminoacyl-tRNA synthetase family.

The protein resides in the cytoplasm. It catalyses the reaction tRNA(Leu) + L-leucine + ATP = L-leucyl-tRNA(Leu) + AMP + diphosphate. The polypeptide is Leucine--tRNA ligase (Serratia proteamaculans (strain 568)).